A 264-amino-acid chain; its full sequence is Acyl-[acyl-carrier-protein]--UDP-N-acetylglucosamine O-acyltransferase (264 aa).

This sequence belongs to the transferase hexapeptide repeat family. LpxA subfamily. As to quaternary structure, homotrimer.

It is found in the cytoplasm. It catalyses the reaction a (3R)-hydroxyacyl-[ACP] + UDP-N-acetyl-alpha-D-glucosamine = a UDP-3-O-[(3R)-3-hydroxyacyl]-N-acetyl-alpha-D-glucosamine + holo-[ACP]. It participates in glycolipid biosynthesis; lipid IV(A) biosynthesis; lipid IV(A) from (3R)-3-hydroxytetradecanoyl-[acyl-carrier-protein] and UDP-N-acetyl-alpha-D-glucosamine: step 1/6. Functionally, involved in the biosynthesis of lipid A, a phosphorylated glycolipid that anchors the lipopolysaccharide to the outer membrane of the cell. In Rickettsia peacockii (strain Rustic), this protein is Acyl-[acyl-carrier-protein]--UDP-N-acetylglucosamine O-acyltransferase.